The following is a 2170-amino-acid chain: Brefeldin A-inhibited guanine nucleotide-exchange protein 3 (2170 aa).

The residue at position 471 (Ser471) is a Phosphoserine. 2 disordered regions span residues 489–547 (EHTP…MGKV) and 613–634 (AAEK…CSLA). Positions 503–524 (ISISVTTDTGQTTLEGELGQTT) are enriched in polar residues. In terms of domain architecture, SEC7 spans 579–792 (RTRSYGSRYS…EELYHQVLDR (214 aa)). Over residues 614 to 623 (AEKDSGRSDV) the composition is skewed to basic and acidic residues. Residues Ser628, Ser632, and Ser1045 each carry the phosphoserine modification. Residues 1488–1508 (PGFGIYAVVHLLLPVMSLWLL) traverse the membrane as a helical segment. The interval 1843-1872 (SSDSSQQCSSEDEDIFEETAQVSPPRGKEK) is disordered. Ser1881 bears the Phosphoserine mark. Residues 1938-1955 (FQSESSTPSTGGFSGKNT) show a composition bias toward polar residues. Disordered regions lie at residues 1938 to 1997 (FQSE…RKKE) and 2024 to 2058 (KRRQ…PLLQ). Basic and acidic residues predominate over residues 1956–1966 (PSEDDRREHLS). Residues Ser1975 and Ser1984 each carry the phosphoserine modification. Basic and acidic residues-rich tracts occupy residues 1986-1997 (KTEKKDPGRKKE) and 2036-2045 (KEVKVDKKGE). Phosphoserine occurs at positions 2072, 2074, 2088, 2094, and 2096. Residues 2078–2097 (ELLRQEKRPRSGSTGSSLSV) form a disordered region. Residues 2088 to 2097 (SGSTGSSLSV) are compositionally biased toward low complexity.

Interacts with PHB2. In terms of tissue distribution, expressed in pancreatic islet (insulin granules of islet alpha and beta cells) and brain (at protein level).

It localises to the cytoplasmic vesicle. It is found in the secretory vesicle. Its subcellular location is the secretory vesicle membrane. In terms of biological role, participates in the regulation of systemic glucose homeostasis, where it negatively regulates insulin granule biogenesis in pancreatic islet beta cells. Also regulates glucagon granule production in pancreatic alpha cells. Inhibits nuclear translocation of the transcriptional coregulator PHB2 and may enhance estrogen receptor alpha (ESR1) transcriptional activity in breast cancer cells. This is Brefeldin A-inhibited guanine nucleotide-exchange protein 3 from Mus musculus (Mouse).